The following is a 137-amino-acid chain: Basic phospholipase A2 PeBP(R)-I/II (137 aa).

An N-terminal signal peptide occupies residues 1 to 16 (MRTLWIMAVLLLGVEG). Cystine bridges form between Cys42/Cys131, Cys44/Cys60, Cys59/Cys111, Cys65/Cys137, Cys66/Cys104, Cys73/Cys97, and Cys91/Cys102. His63 is an active-site residue. Residue Asp105 is part of the active site.

This sequence belongs to the phospholipase A2 family. Group II subfamily. R49 sub-subfamily. In terms of tissue distribution, expressed by the venom gland.

The protein resides in the secreted. It carries out the reaction a 1,2-diacyl-sn-glycero-3-phosphocholine + H2O = a 1-acyl-sn-glycero-3-phosphocholine + a fatty acid + H(+). Snake venom phospholipases A2 that have myotoxic, and edema-inducing activity, as well as extremely weak lipolytic activity. PLA2 catalyzes the calcium-dependent hydrolysis of the 2-acyl groups in 3-sn-phosphoglycerides. The polypeptide is Basic phospholipase A2 PeBP(R)-I/II (Protobothrops elegans (Elegant pitviper)).